The following is a 337-amino-acid chain: Protein XAP5 CIRCADIAN TIMEKEEPER (337 aa).

Ser-2 is subject to N-acetylserine. 2 coiled-coil regions span residues 13–41 (QDAV…KSAS) and 72–121 (TREE…GSSR). The span at 23-37 (KQREAERKKIQELKS) shows a compositional bias: basic and acidic residues. The disordered stretch occupies residues 23 to 47 (KQREAERKKIQELKSKSASGNDQSG). Positions 38-47 (KSASGNDQSG) are enriched in polar residues. The interval 125–174 (AEDFENGSDEDDGENKSSGTGNLRCGKLGKDPSVETNFLPDSEREAEEQA) is disordered. The segment covering 126–137 (EDFENGSDEDDG) has biased composition (acidic residues). At Ser-132 the chain carries Phosphoserine. Basic and acidic residues predominate over residues 165 to 174 (DSEREAEEQA).

The protein belongs to the FAM50 family. As to expression, expressed in leaves stems, flowers, roots, trichomes and hypocotyls.

Its subcellular location is the nucleus. In terms of biological role, involved in light regulation of the circadian clock and photomorphogenesis. May play a global role in coordinating growth in response to the light environment. Acts as a light quality sensor directing both negative and positive transcriptional regulation. Inhibits growth in red light but promote growth in blue light. Inhibits clock gene expression in diurnal cycles. Plays no role in the control of flowering time. This is Protein XAP5 CIRCADIAN TIMEKEEPER (XCT) from Arabidopsis thaliana (Mouse-ear cress).